Reading from the N-terminus, the 391-residue chain is 1-deoxy-D-xylulose 5-phosphate reductoisomerase (391 aa).

Residues threonine 17, glycine 18, serine 19, isoleucine 20, asparagine 47, and asparagine 130 each coordinate NADPH. Lysine 131 is a 1-deoxy-D-xylulose 5-phosphate binding site. Residue glutamate 132 participates in NADPH binding. Residue aspartate 156 participates in Mn(2+) binding. 4 residues coordinate 1-deoxy-D-xylulose 5-phosphate: serine 157, glutamate 158, serine 182, and histidine 205. A Mn(2+)-binding site is contributed by glutamate 158. Residue glycine 211 participates in NADPH binding. Residues serine 218, asparagine 223, lysine 224, and glutamate 227 each coordinate 1-deoxy-D-xylulose 5-phosphate. Glutamate 227 contributes to the Mn(2+) binding site.

Belongs to the DXR family. Mg(2+) is required as a cofactor. Mn(2+) serves as cofactor.

The catalysed reaction is 2-C-methyl-D-erythritol 4-phosphate + NADP(+) = 1-deoxy-D-xylulose 5-phosphate + NADPH + H(+). It functions in the pathway isoprenoid biosynthesis; isopentenyl diphosphate biosynthesis via DXP pathway; isopentenyl diphosphate from 1-deoxy-D-xylulose 5-phosphate: step 1/6. Functionally, catalyzes the NADPH-dependent rearrangement and reduction of 1-deoxy-D-xylulose-5-phosphate (DXP) to 2-C-methyl-D-erythritol 4-phosphate (MEP). This Sinorhizobium medicae (strain WSM419) (Ensifer medicae) protein is 1-deoxy-D-xylulose 5-phosphate reductoisomerase.